The following is a 906-amino-acid chain: Catenin alpha-1 (906 aa).

Threonine 2 is subject to N-acetylthreonine. Positions 2–228 (TAVHAGNINF…PILYTASQAC (227 aa)) are involved in homodimerization. Lysine 57 is covalently cross-linked (Glycyl lysine isopeptide (Lys-Gly) (interchain with G-Cter in SUMO2)). The segment at 97–148 (VRKQGDLMKSAAGEFADDPCSSVKRGNMVRAARALLSAVTRLLILADMADVY) is interaction with JUP and CTNNB1. Serine 264, serine 295, and serine 297 each carry phosphoserine. Residues 325 to 394 (TRDDRRERIV…AVMDHVSDSF (70 aa)) are interaction with alpha-actinin. A Phosphothreonine modification is found at threonine 634. The residue at position 641 (serine 641) is a Phosphoserine. Residue threonine 645 is modified to Phosphothreonine. A phosphoserine mark is found at serine 652 and serine 655. Threonine 658 carries the post-translational modification Phosphothreonine. Residue lysine 797 forms a Glycyl lysine isopeptide (Lys-Gly) (interchain with G-Cter in SUMO2) linkage. Residue serine 851 is modified to Phosphoserine. Residues 864-880 (PEKKPLVKREKQDETQT) show a composition bias toward basic and acidic residues. The disordered stretch occupies residues 864–894 (PEKKPLVKREKQDETQTKIKRASQKKHVNPV). The segment covering 881 to 891 (KIKRASQKKHV) has biased composition (basic residues).

This sequence belongs to the vinculin/alpha-catenin family. Monomer and homodimer; the monomer preferentially binds to CTNNB1 and the homodimer to actin. Component of an cadherin:catenin adhesion complex composed of at least of CDH26, beta-catenin/CTNNB1, alpha-catenin/CTNNA1 and p120 catenin/CTNND1. Possible component of an E-cadherin/ catenin adhesion complex together with E-cadherin/CDH1 and beta-catenin/CTNNB1 or gamma-catenin/JUP; the complex is located to adherens junctions. The stable association of CTNNA1 is controversial as CTNNA1 was shown not to bind to F-actin when assembled in the complex. Alternatively, the CTNNA1-containing complex may be linked to F-actin by other proteins such as LIMA1. Binds AFDN and F-actin. Interacts with LIMA1. Interacts with ARHGAP21. Interacts with AJUBA. Interacts with vinculin/VCL. Interacts with TJP2/ZO2 (via N-terminus). Interacts with TJP1/ZO1 (via N-terminus). In terms of processing, sumoylated. Post-translationally, phosphorylation seems to contribute to the strength of cell-cell adhesion rather than to the basic capacity for cell-cell adhesion. In terms of tissue distribution, expressed in cerebellum, heart, liver, small intestine, kidney and placenta (at protein level).

It is found in the cytoplasm. The protein resides in the cytoskeleton. Its subcellular location is the cell junction. It localises to the adherens junction. The protein localises to the cell membrane. It is found in the nucleus. In terms of biological role, associates with the cytoplasmic domain of a variety of cadherins. The association of catenins to cadherins produces a complex which is linked to the actin filament network, and which seems to be of primary importance for cadherins cell-adhesion properties. Can associate with both E- and N-cadherins. Originally believed to be a stable component of E-cadherin/catenin adhesion complexes and to mediate the linkage of cadherins to the actin cytoskeleton at adherens junctions. In contrast, cortical actin was found to be much more dynamic than E-cadherin/catenin complexes and CTNNA1 was shown not to bind to F-actin when assembled in the complex suggesting a different linkage between actin and adherens junctions components. The homodimeric form may regulate actin filament assembly and inhibit actin branching by competing with the Arp2/3 complex for binding to actin filaments. Involved in the regulation of WWTR1/TAZ, YAP1 and TGFB1-dependent SMAD2 and SMAD3 nuclear accumulation. May play a crucial role in cell differentiation. The polypeptide is Catenin alpha-1 (Mus musculus (Mouse)).